A 433-amino-acid chain; its full sequence is 3-phosphoshikimate 1-carboxyvinyltransferase (433 aa).

Lys21, Ser22, and Arg26 together coordinate 3-phosphoshikimate. Lys21 is a phosphoenolpyruvate binding site. Phosphoenolpyruvate is bound by residues Gly92 and Arg120. 3-phosphoshikimate contacts are provided by Ser166, Gln168, Asp317, and Lys344. Gln168 is a phosphoenolpyruvate binding site. Asp317 functions as the Proton acceptor in the catalytic mechanism. Residues Arg348 and Arg391 each contribute to the phosphoenolpyruvate site.

This sequence belongs to the EPSP synthase family. In terms of assembly, monomer.

The protein resides in the cytoplasm. It carries out the reaction 3-phosphoshikimate + phosphoenolpyruvate = 5-O-(1-carboxyvinyl)-3-phosphoshikimate + phosphate. It participates in metabolic intermediate biosynthesis; chorismate biosynthesis; chorismate from D-erythrose 4-phosphate and phosphoenolpyruvate: step 6/7. In terms of biological role, catalyzes the transfer of the enolpyruvyl moiety of phosphoenolpyruvate (PEP) to the 5-hydroxyl of shikimate-3-phosphate (S3P) to produce enolpyruvyl shikimate-3-phosphate and inorganic phosphate. In Caldicellulosiruptor bescii (strain ATCC BAA-1888 / DSM 6725 / KCTC 15123 / Z-1320) (Anaerocellum thermophilum), this protein is 3-phosphoshikimate 1-carboxyvinyltransferase.